The following is a 446-amino-acid chain: Phosphoglucosamine mutase (446 aa).

Ser-102 functions as the Phosphoserine intermediate in the catalytic mechanism. Residues Ser-102, Asp-241, Asp-243, and Asp-245 each contribute to the Mg(2+) site. Ser-102 carries the phosphoserine modification.

This sequence belongs to the phosphohexose mutase family. Mg(2+) is required as a cofactor. In terms of processing, activated by phosphorylation.

The catalysed reaction is alpha-D-glucosamine 1-phosphate = D-glucosamine 6-phosphate. Functionally, catalyzes the conversion of glucosamine-6-phosphate to glucosamine-1-phosphate. The sequence is that of Phosphoglucosamine mutase from Xylella fastidiosa (strain M12).